Here is a 135-residue protein sequence, read N- to C-terminus: MTEILTTSNSAEDLLDMDGRVSEQRLAQLRIRQQQERVTKELRDVIQIHQCKKGIFCLVKQAKISYEITATDHRLSYELGPQRQKFTCMVGINPIVITQQSGDTKGCIHCSCDSIECTYTLLKTLCGLRDLLPMN.

The protein belongs to the adenoviridae E3_15 family.

Functionally, protects virus-infected cells from TNF-induced cytolysis. This is Early E3 15.3 kDa protein from Human adenovirus B serotype 7 (HAdV-7).